The chain runs to 2111 residues: Glutamate synthase [NADH] (2111 aa).

Residue cysteine 69 is the Nucleophile of the active site. In terms of domain architecture, Glutamine amidotransferase type-2 spans 69 to 469 (CGVGFTCHIK…PGRMLLVDTK (401 aa)). The segment at 969–990 (GGKSNTGEGGEDPARSQRLANG) is disordered. 1139–1191 (VAETHQTLVLNDLRGRVVIQTDGQIRTGRDVAIACLLGAEEWGFATTPLIALG) provides a ligand contact to FMN. Positions 1192, 1198, and 1203 each coordinate [3Fe-4S] cluster.

This sequence belongs to the glutamate synthase family. Homotrimer. It depends on [3Fe-4S] cluster as a cofactor. FAD serves as cofactor. FMN is required as a cofactor.

Its subcellular location is the cytoplasm. It carries out the reaction 2 L-glutamate + NAD(+) = L-glutamine + 2-oxoglutarate + NADH + H(+). The protein operates within amino-acid biosynthesis; L-glutamate biosynthesis via GLT pathway; L-glutamate from 2-oxoglutarate and L-glutamine (NAD(+) route): step 1/1. It functions in the pathway energy metabolism; nitrogen metabolism. In the presence of 10 mM allantoin, the activity is reduced more than 25%. Forms L-glutamate from L-glutamine and 2-oxoglutarate. Represents an alternative pathway to L-glutamate dehydrogenase for the biosynthesis of L-glutamate. Participates with glutamine synthetase in ammonia assimilation processes. The enzyme is specific for NADH, L-glutamine and 2-oxoglutarate. The protein is Glutamate synthase [NADH] (glt1) of Schizosaccharomyces pombe (strain 972 / ATCC 24843) (Fission yeast).